Here is a 348-residue protein sequence, read N- to C-terminus: Uroporphyrinogen decarboxylase (348 aa).

Residues 28-32 (RQAGR), Asp-78, Tyr-154, Thr-209, and His-325 each bind substrate.

Belongs to the uroporphyrinogen decarboxylase family. As to quaternary structure, homodimer.

The protein resides in the cytoplasm. It catalyses the reaction uroporphyrinogen III + 4 H(+) = coproporphyrinogen III + 4 CO2. The protein operates within porphyrin-containing compound metabolism; protoporphyrin-IX biosynthesis; coproporphyrinogen-III from 5-aminolevulinate: step 4/4. Catalyzes the decarboxylation of four acetate groups of uroporphyrinogen-III to yield coproporphyrinogen-III. This Rhodopseudomonas palustris (strain HaA2) protein is Uroporphyrinogen decarboxylase.